The chain runs to 309 residues: Phytoene synthase (309 aa).

This sequence belongs to the phytoene/squalene synthase family.

It carries out the reaction 2 (2E,6E,10E)-geranylgeranyl diphosphate = 15-cis-phytoene + 2 diphosphate. The protein operates within carotenoid biosynthesis; phytoene biosynthesis; all-trans-phytoene from geranylgeranyl diphosphate: step 1/1. In terms of biological role, catalyzes the reaction from prephytoene diphosphate to phytoene. This is Phytoene synthase (crtB) from Arthrospira platensis (Spirulina platensis).